Here is a 487-residue protein sequence, read N- to C-terminus: Transcriptional adapter ADA2b (487 aa).

Positions 1–13 (MGRSRGNFQNFED) are enriched in polar residues. The disordered stretch occupies residues 1 to 25 (MGRSRGNFQNFEDPTQRTRKKKNAA). Residues 42–98 (GGKYNCDYCQKDITGKIRIKCAVCPDFDLCIECMSVGAEITPHKCDHPYRVMGNLTF) form a ZZ-type zinc finger. Zn(2+) is bound by residues C47, C50, C62, C65, C71, C74, H84, and H88. The 53-residue stretch at 100–152 (LICPDWSADDEMLLLEGLEIYGLGNWAEVAEHVGTKSKEQCLEHYRNIYLNSP) folds into the SANT domain. K216 is subject to N6-acetyllysine; by GCN5. Basic and acidic residues predominate over residues 368 to 383 (RKRKRENEEGMNRGKE). The disordered stretch occupies residues 368-388 (RKRKRENEEGMNRGKESGQFG). Residues 401-487 (QASSSYVNDL…MLVKKGIAQL (87 aa)) enclose the SWIRM domain.

Interacts in vitro with the HAT domain of GCN5 and with the DNA-binding domain of the transcriptional activator DREB1B/CBF1. Interacts with BZIP11. Acetylated in vitro by GCN5, but acetylation is not essential for biological activity. As to expression, expressed in roots, leaves, stems, flowers and siliques, with the strongest activity in the meristematic zones.

The protein localises to the nucleus. Its function is as follows. Required for the function of some acidic activation domains, which activate transcription from a distant site. The exact mechanism of action is not yet known. ADA2 stimulates the acetyltransferase activity of GCN5 on free histones or nucleosomes, probably by opening up the promoter region. Mediates auxin and cytokinin signals in the control of cell proliferation and might be involved in repression of a freezing tolerance pathway at warm temperature. Involved in the positive regulation of salt-induced gene expression by maintaining locus-specific acetylation of histones H4 and H3. The chain is Transcriptional adapter ADA2b (ADA2B) from Arabidopsis thaliana (Mouse-ear cress).